The following is a 367-amino-acid chain: MTLQRTPLHQLCQDGGGRMVPFAGWEMPVQFSGLIQEHKAVREQVGMFDISHMGVLRLEGPNPKDALQQLVPSDLHRIGPGEACYTVLLNESGGIRDDLIVYDCGAVDAERGALVLVINAACAEADTAWIRDQMEPAGLTVSDLKAGGVLLALQGPQSIPLLEELSGESLSDLPRFGHRTLSLKDIAHPVFTGRTGYTGEDGAELLLTAADGQKLWQILLDRGVSPCGLGARDTLRLEAAMHLYGMDMNAETTPFEAGLGWLVHLEMPVDFVGRQALEQAAESGPTKRLVGLKLQGRAIARHDYPVLHNGETVGVVTSGTWSPTLEEPIALAYVPTALAKLGAELSVEIRGKAQPACVVKRPFYRRS.

Belongs to the GcvT family. In terms of assembly, the glycine cleavage system is composed of four proteins: P, T, L and H.

The enzyme catalyses N(6)-[(R)-S(8)-aminomethyldihydrolipoyl]-L-lysyl-[protein] + (6S)-5,6,7,8-tetrahydrofolate = N(6)-[(R)-dihydrolipoyl]-L-lysyl-[protein] + (6R)-5,10-methylene-5,6,7,8-tetrahydrofolate + NH4(+). The glycine cleavage system catalyzes the degradation of glycine. The chain is Aminomethyltransferase from Parasynechococcus marenigrum (strain WH8102).